The sequence spans 492 residues: Dipeptide permease D (492 aa).

A run of 13 helical transmembrane segments spans residues 14–34 (VVAL…LLIL), 49–69 (ALFS…GYLA), 91–111 (LVLG…AIIV), 138–158 (GGFS…PIAC), 167–187 (WAMG…IFLC), 212–232 (NWGW…VLFW), 236–256 (SVYA…RIYL), 269–289 (LIVV…QGGS), 312–332 (MFQS…AWLV), 344–364 (IWGK…ILTL), 379–399 (LMVL…PVAM), 413–433 (VLTG…AGVI), and 458–478 (VFSQ…VIWL).

This sequence belongs to the major facilitator superfamily. Proton-dependent oligopeptide transporter (POT/PTR) (TC 2.A.17) family. DtpD subfamily.

The protein resides in the cell inner membrane. In terms of biological role, probable proton-dependent permease that transports dipeptides. The sequence is that of Dipeptide permease D from Klebsiella pneumoniae subsp. pneumoniae (strain ATCC 700721 / MGH 78578).